A 654-amino-acid polypeptide reads, in one-letter code: MSDFQHAQLDWDENGQPLSRAFGDVYFSRHSGLNETRHVFLATNRLAERFAALGDGEVLCIGETGFGTGLNFLCAWQLFEQVAPAGARLEFVSVEKFPLAAADLRRALALWPELAPWSEALLGQYLAVHPGFQRLAFAGGRIGLTLLLGDALECLPQLDARVDAWFLDGFAPAKNPDMWSPALFAELARLSAPQATLGTFTSAGFVRRGLIEAGFAMQRVPGYGQKREMLGGTYQGPPANAGKPWYARPAPHAGRRAALVVGGGLAGCASAASLAARGWQVTLIERHPGLAREASGNPQGVLYLKLSAHGTPLSRLVLSGFGHTRRLLERLRRGHDWDACGVLQLAFDAKEAQRQAQLAAAFPADLLHGLDREQAERLAGVALPAGGLFYPEAGWVHPPALCQALAATPGITLLSGRAVRLRREGDDWCAYAGDECLARAPLAILATAADIRDFPPAAELPLKRIRGQVTRLPATPQSRALRTVVCAEGYVAPPRGDEHTLGASFDFKSEDLAPTLAEHQGNLELLREISPDLLQRLGADDLPLERLEGRAAFRCTSPDYLPLVGPLAERAAFDEAYAVLARDARQVPERACPWLPGLYLNSGHGSRGLISAPLSGELLAAWICGEPLPLPRAVAEACHPNRFLLRDLVRGQRG.

Positions 1 to 235 are tRNA (mnm(5)s(2)U34)-methyltransferase; sequence MSDFQHAQLD…KREMLGGTYQ (235 aa). The segment at 261–654 is FAD-dependent cmnm(5)s(2)U34 oxidoreductase; it reads VGGGLAGCAS…LRDLVRGQRG (394 aa).

The protein in the N-terminal section; belongs to the methyltransferase superfamily. tRNA (mnm(5)s(2)U34)-methyltransferase family. In the C-terminal section; belongs to the DAO family. The cofactor is FAD.

The protein resides in the cytoplasm. It carries out the reaction 5-aminomethyl-2-thiouridine(34) in tRNA + S-adenosyl-L-methionine = 5-methylaminomethyl-2-thiouridine(34) in tRNA + S-adenosyl-L-homocysteine + H(+). Functionally, catalyzes the last two steps in the biosynthesis of 5-methylaminomethyl-2-thiouridine (mnm(5)s(2)U) at the wobble position (U34) in tRNA. Catalyzes the FAD-dependent demodification of cmnm(5)s(2)U34 to nm(5)s(2)U34, followed by the transfer of a methyl group from S-adenosyl-L-methionine to nm(5)s(2)U34, to form mnm(5)s(2)U34. This is tRNA 5-methylaminomethyl-2-thiouridine biosynthesis bifunctional protein MnmC from Pseudomonas aeruginosa (strain UCBPP-PA14).